A 1059-amino-acid polypeptide reads, in one-letter code: DNA-directed RNA polymerase subunit beta (1059 aa).

Belongs to the RNA polymerase beta chain family. In plastids the minimal PEP RNA polymerase catalytic core is composed of four subunits: alpha, beta, beta', and beta''. When a (nuclear-encoded) sigma factor is associated with the core the holoenzyme is formed, which can initiate transcription (Potential).

The protein localises to the plastid. It localises to the apicoplast. The enzyme catalyses RNA(n) + a ribonucleoside 5'-triphosphate = RNA(n+1) + diphosphate. Its function is as follows. DNA-dependent RNA polymerase catalyzes the transcription of DNA into RNA using the four ribonucleoside triphosphates as substrates. The polypeptide is DNA-directed RNA polymerase subunit beta (rpoB) (Eimeria tenella (Coccidian parasite)).